Reading from the N-terminus, the 372-residue chain is Cytochrome b (372 aa).

4 helical membrane passes run Phe-25–Ile-45, Trp-69–Ile-90, Trp-105–Leu-125, and Phe-170–Ile-190. The heme b site is built by His-75 and His-89. Positions 174 and 188 each coordinate heme b. His-193 contributes to the a ubiquinone binding site. Transmembrane regions (helical) follow at residues Tyr-218–Ser-238, Leu-280–His-300, Leu-312–Ser-332, and Phe-339–Pro-358.

It belongs to the cytochrome b family. As to quaternary structure, the cytochrome bc1 complex contains 3 respiratory subunits (MT-CYB, CYC1 and UQCRFS1), 2 core proteins (UQCRC1 and UQCRC2) and probably 6 low-molecular weight proteins. Heme b is required as a cofactor.

It localises to the mitochondrion inner membrane. Component of the ubiquinol-cytochrome c reductase complex (complex III or cytochrome b-c1 complex) that is part of the mitochondrial respiratory chain. The b-c1 complex mediates electron transfer from ubiquinol to cytochrome c. Contributes to the generation of a proton gradient across the mitochondrial membrane that is then used for ATP synthesis. This is Cytochrome b (MT-CYB) from Naja multifasciata (Burrowing cobra).